Consider the following 1188-residue polypeptide: DNA-directed RNA polymerase subunit beta (1188 aa).

This sequence belongs to the RNA polymerase beta chain family. As to quaternary structure, the RNAP catalytic core consists of 2 alpha, 1 beta, 1 beta' and 1 omega subunit. When a sigma factor is associated with the core the holoenzyme is formed, which can initiate transcription.

The catalysed reaction is RNA(n) + a ribonucleoside 5'-triphosphate = RNA(n+1) + diphosphate. Functionally, DNA-dependent RNA polymerase catalyzes the transcription of DNA into RNA using the four ribonucleoside triphosphates as substrates. The polypeptide is DNA-directed RNA polymerase subunit beta (Streptococcus equi subsp. zooepidemicus (strain H70)).